The following is a 350-amino-acid chain: Uroporphyrinogen decarboxylase (350 aa).

Substrate-binding positions include 27–31 (RQAGR), Phe-46, Asp-76, Tyr-152, Ser-207, and His-321.

This sequence belongs to the uroporphyrinogen decarboxylase family. In terms of assembly, homodimer.

It localises to the cytoplasm. It carries out the reaction uroporphyrinogen III + 4 H(+) = coproporphyrinogen III + 4 CO2. The protein operates within porphyrin-containing compound metabolism; protoporphyrin-IX biosynthesis; coproporphyrinogen-III from 5-aminolevulinate: step 4/4. In terms of biological role, catalyzes the decarboxylation of four acetate groups of uroporphyrinogen-III to yield coproporphyrinogen-III. The sequence is that of Uroporphyrinogen decarboxylase from Listeria welshimeri serovar 6b (strain ATCC 35897 / DSM 20650 / CCUG 15529 / CIP 8149 / NCTC 11857 / SLCC 5334 / V8).